We begin with the raw amino-acid sequence, 382 residues long: D-galactonate dehydratase (382 aa).

Mg(2+) is bound at residue aspartate 183. Histidine 185 acts as the Proton donor in catalysis. The Mg(2+) site is built by glutamate 209 and glutamate 235. Histidine 285 (proton acceptor) is an active-site residue.

This sequence belongs to the mandelate racemase/muconate lactonizing enzyme family. GalD subfamily. The cofactor is Mg(2+).

The catalysed reaction is D-galactonate = 2-dehydro-3-deoxy-D-galactonate + H2O. It participates in carbohydrate acid metabolism; D-galactonate degradation; D-glyceraldehyde 3-phosphate and pyruvate from D-galactonate: step 1/3. Functionally, catalyzes the dehydration of D-galactonate to 2-keto-3-deoxy-D-galactonate. The protein is D-galactonate dehydratase of Klebsiella pneumoniae (strain 342).